A 100-amino-acid polypeptide reads, in one-letter code: Urease subunit gamma (100 aa).

The protein belongs to the urease gamma subunit family. As to quaternary structure, heterotrimer of UreA (gamma), UreB (beta) and UreC (alpha) subunits. Three heterotrimers associate to form the active enzyme.

The protein resides in the cytoplasm. It catalyses the reaction urea + 2 H2O + H(+) = hydrogencarbonate + 2 NH4(+). The protein operates within nitrogen metabolism; urea degradation; CO(2) and NH(3) from urea (urease route): step 1/1. In Acinetobacter baumannii (strain SDF), this protein is Urease subunit gamma.